Consider the following 31-residue polypeptide: Cytochrome b6-f complex subunit 6 (31 aa).

A helical membrane pass occupies residues isoleucine 4–glycine 24.

The protein belongs to the PetL family. The 4 large subunits of the cytochrome b6-f complex are cytochrome b6, subunit IV (17 kDa polypeptide, PetD), cytochrome f and the Rieske protein, while the 4 small subunits are PetG, PetL, PetM and PetN. The complex functions as a dimer.

It localises to the plastid. The protein localises to the chloroplast thylakoid membrane. Functionally, component of the cytochrome b6-f complex, which mediates electron transfer between photosystem II (PSII) and photosystem I (PSI), cyclic electron flow around PSI, and state transitions. PetL is important for photoautotrophic growth as well as for electron transfer efficiency and stability of the cytochrome b6-f complex. The sequence is that of Cytochrome b6-f complex subunit 6 from Chlorella vulgaris (Green alga).